The primary structure comprises 400 residues: Putative cytochrome P450 141 (400 aa).

2 consecutive transmembrane segments (helical) span residues 225–245 (VVGM…AVIT) and 294–314 (VVIA…ITSA). Cys-346 contacts heme.

This sequence belongs to the cytochrome P450 family. Requires heme as cofactor.

It localises to the cell membrane. The protein is Putative cytochrome P450 141 (cyp141) of Mycobacterium tuberculosis (strain CDC 1551 / Oshkosh).